We begin with the raw amino-acid sequence, 229 residues long: GTP cyclohydrolase 1 (229 aa).

Residues 1 to 26 (MDAKIKPLRGGKPADARPEFQPAELD) are disordered. Positions 118, 121, and 189 each coordinate Zn(2+).

The protein belongs to the GTP cyclohydrolase I family. As to quaternary structure, toroid-shaped homodecamer, composed of two pentamers of five dimers.

The enzyme catalyses GTP + H2O = 7,8-dihydroneopterin 3'-triphosphate + formate + H(+). Its pathway is cofactor biosynthesis; 7,8-dihydroneopterin triphosphate biosynthesis; 7,8-dihydroneopterin triphosphate from GTP: step 1/1. This chain is GTP cyclohydrolase 1, found in Rhodopseudomonas palustris (strain BisB5).